Reading from the N-terminus, the 560-residue chain is Thermosome subunit alpha (560 aa).

Residues Ser535–Ser547 show a composition bias toward basic and acidic residues. The interval Ser535 to Asp560 is disordered.

The protein belongs to the TCP-1 chaperonin family. As to quaternary structure, forms a heterooligomeric complex of two stacked nine-membered rings; one of alpha and the other of beta subunits. Sometimes called a 'rosettasome'.

It is found in the cytoplasm. It carries out the reaction ATP + H2O = ADP + phosphate + H(+). Molecular chaperone; binds unfolded polypeptides in vitro, stimulates protein folding and has ATPase activity. One of the most abundant proteins in the cell at all temperatures. This chain is Thermosome subunit alpha (thsA), found in Saccharolobus shibatae (strain ATCC 51178 / DSM 5389 / JCM 8931 / NBRC 15437 / B12) (Sulfolobus shibatae).